Consider the following 314-residue polypeptide: 2,3,4,5-tetrahydropyridine-2,6-dicarboxylate N-succinyltransferase (314 aa).

Mg(2+)-binding residues include Asp163 and Glu180. Glu196 (acyl-anhydride intermediate) is an active-site residue. Residues Arg198, Gly213, Ser216, Ala239, 254–255, Gly262, Lys274, and 287–290 contribute to the succinyl-CoA site; these read EA and RRNS.

The protein belongs to the type 2 tetrahydrodipicolinate N-succinyltransferase family. Homotrimer.

The protein resides in the cytoplasm. It carries out the reaction (S)-2,3,4,5-tetrahydrodipicolinate + succinyl-CoA + H2O = (S)-2-succinylamino-6-oxoheptanedioate + CoA. The protein operates within amino-acid biosynthesis; L-lysine biosynthesis via DAP pathway; LL-2,6-diaminopimelate from (S)-tetrahydrodipicolinate (succinylase route): step 1/3. Its function is as follows. Catalyzes the conversion of the cyclic tetrahydrodipicolinate (THDP) into the acyclic N-succinyl-L-2-amino-6-oxopimelate using succinyl-CoA. This is 2,3,4,5-tetrahydropyridine-2,6-dicarboxylate N-succinyltransferase from Mycolicibacterium smegmatis (strain ATCC 700084 / mc(2)155) (Mycobacterium smegmatis).